We begin with the raw amino-acid sequence, 139 residues long: ATP synthase epsilon chain (139 aa).

Belongs to the ATPase epsilon chain family. In terms of assembly, F-type ATPases have 2 components, CF(1) - the catalytic core - and CF(0) - the membrane proton channel. CF(1) has five subunits: alpha(3), beta(3), gamma(1), delta(1), epsilon(1). CF(0) has three main subunits: a, b and c.

It is found in the cell membrane. Functionally, produces ATP from ADP in the presence of a proton gradient across the membrane. This is ATP synthase epsilon chain from Streptococcus sanguinis.